A 100-amino-acid chain; its full sequence is Cell division protein DrpB (100 aa).

The Cytoplasmic portion of the chain corresponds to 1–16 (MEYGSTKMEERLSRSP). Residues 17-37 (GGKLALWAFYTWCGYFVWAMA) traverse the membrane as a helical segment. Topologically, residues 38-64 (RYIWVMSRIPDAPVSGFESDLGSTAGK) are periplasmic. Residues 65 to 85 (WLGALVGFLFMALVGALLGSI) form a helical membrane-spanning segment. Over 86–100 (AWYTRPRPARSRRYE) the chain is Cytoplasmic.

It belongs to the DrpB family. Bacterial adenylate cyclase hybrid (BACTH) studies show interaction of this protein with DamX, FtsI, FtsN, FtsQ, YmgF, DedD, FtsA and MalF, as well as weaker interactions with DedD, MalG and PBP2, but this assay often generates false positive results.

The protein resides in the cell inner membrane. A non-essential division protein that localizes to the septal ring in low ionic strength medium. Functionally, localizes to the septal ring in about 30% of observed cells before cell constriction occurs; localization occurs in low ionic strength medium (0 NaCl) and requires FtsZ but not FtsEX. Overexpression partially restores correct FtsI localization to the division septum in an ftsEX deletion. Isolated as a multicopy suppressor of an ftsEX deletion mutant; it does not suppress other cell division defects (e.g. ftsA, ftsI, ftsQ or ftsZ). This is Cell division protein DrpB from Escherichia coli (strain K12).